Reading from the N-terminus, the 116-residue chain is Large ribosomal subunit protein bL17 (116 aa).

This sequence belongs to the bacterial ribosomal protein bL17 family. Part of the 50S ribosomal subunit. Contacts protein L32.

This Acaryochloris marina (strain MBIC 11017) protein is Large ribosomal subunit protein bL17.